The sequence spans 568 residues: Protein KATNIP homolog (568 aa).

The segment covering 1–20 (MSDSDLKEIEKNAENIKLEP) has biased composition (basic and acidic residues). The segment at 1–30 (MSDSDLKEIEKNAENIKLEPAEDEVNEEDQ) is disordered. The span at 21–30 (AEDEVNEEDQ) shows a compositional bias: acidic residues.

In terms of tissue distribution, expressed in most ciliated neuronal cells. Not expressed in non-ciliated cells.

The protein localises to the cytoplasm. The protein resides in the cytoskeleton. It is found in the cilium axoneme. Its subcellular location is the cilium basal body. May regulate ciliary A-tubule number and, along with arl-13, controls cilium integrity. The protein is Protein KATNIP homolog of Caenorhabditis elegans.